A 157-amino-acid chain; its full sequence is Ribosome maturation factor RimP (157 aa).

The protein belongs to the RimP family.

Its subcellular location is the cytoplasm. Functionally, required for maturation of 30S ribosomal subunits. The sequence is that of Ribosome maturation factor RimP from Lactococcus lactis subsp. cremoris (strain MG1363).